The primary structure comprises 588 residues: Arginine--tRNA ligase (588 aa).

The short motif at 124–134 (PNVAKPMHVGH) is the 'HIGH' region element.

The protein belongs to the class-I aminoacyl-tRNA synthetase family. As to quaternary structure, monomer.

It is found in the cytoplasm. It carries out the reaction tRNA(Arg) + L-arginine + ATP = L-arginyl-tRNA(Arg) + AMP + diphosphate. The protein is Arginine--tRNA ligase of Maricaulis maris (strain MCS10) (Caulobacter maris).